The chain runs to 278 residues: Small ribosomal subunit biogenesis GTPase RsgA (278 aa).

Residues Lys62 to Ile218 enclose the CP-type G domain. Residues Thr112 to Asp115 and Gly162 to Ser170 contribute to the GTP site. Residues Cys241, Cys246, His248, and Cys254 each coordinate Zn(2+).

This sequence belongs to the TRAFAC class YlqF/YawG GTPase family. RsgA subfamily. In terms of assembly, monomer. Associates with 30S ribosomal subunit, binds 16S rRNA. Zn(2+) is required as a cofactor.

It localises to the cytoplasm. In terms of biological role, one of several proteins that assist in the late maturation steps of the functional core of the 30S ribosomal subunit. Helps release RbfA from mature subunits. May play a role in the assembly of ribosomal proteins into the subunit. Circularly permuted GTPase that catalyzes slow GTP hydrolysis, GTPase activity is stimulated by the 30S ribosomal subunit. The chain is Small ribosomal subunit biogenesis GTPase RsgA from Mycoplasma genitalium (strain ATCC 33530 / DSM 19775 / NCTC 10195 / G37) (Mycoplasmoides genitalium).